A 280-amino-acid chain; its full sequence is MRILRYVSDLHLEYIDCIDGKSALNSLWDFKKDPNDIYYLALLGDIGNPFDKSIKKFFQKISPIYDKIFYVPGNHEYYNLNKPYRSIDDFNSQLKNMCQEFPNIILMNNEIYELDDISFIGSTLWSNISESKSNHISKSINDYHLIKKIDNNKLTKITIDDTNKWNTESIDYILNQLKNSIKPLIILTHHAPLFSDNILGNYTADPCYINSLNNEAFHNDLSKILNQPIIAWLYGHTHYTSKFIYNGIIIATNQLGYSHERNNFNPYAYIDIDQLLIDNL.

This is an uncharacterized protein from Acanthamoeba polyphaga (Amoeba).